Reading from the N-terminus, the 378-residue chain is Stimulator of interferon genes protein (378 aa).

Topologically, residues 1–17 (MPHSSLHPSIPQPRGLR) are cytoplasmic. The mediates interaction with ZDHHC1 and ZDHHC11 stretch occupies residues 1–190 (MPHSSLHPSI…IYNQFHNNTL (190 aa)). The chain crosses the membrane as a helical span at residues 18-34 (AQKAALVLLSACLVALW). Over 35-44 (GLGEPPDYTL) the chain is Lumenal. Residues 45–69 (KWLVLHLASQQMGLLIKGICSLAEE) traverse the membrane as a helical segment. At 70–91 (LCHVHSRYHGSYWRAVRACLCS) the chain is on the cytoplasmic side. A lipid anchor (S-palmitoyl cysteine) is attached at Cys-88. Residues 92 to 106 (SMRCGALLLLSCYFY) traverse the membrane as a helical segment. The Lumenal segment spans residues 107–116 (CSLPNMADLP). A helical transmembrane segment spans residues 117–134 (FTWMLALLGLSQALNILL). Residues 135–378 (GLQGLAPAEV…KPLPLRSDVF (244 aa)) are Cytoplasmic-facing. A Glycyl lysine isopeptide (Lys-Gly) (interchain with G-Cter in ubiquitin) cross-link involves residue Lys-150. Residues 153-339 (FNVAHGLAWS…LQHLRQEERE (187 aa)) are cyclic dinucleotide-binding domain (CBD). 2 residues coordinate 2',3'-cGAMP: Ser-162 and Tyr-167. 2 residues coordinate 3',3'-c-di-GMP: Ser-162 and Tyr-167. Residue Tyr-167 participates in 2',3'-cUAMP binding. Residue Lys-236 forms a Glycyl lysine isopeptide (Lys-Gly) (interchain with G-Cter in ubiquitin) linkage. 2',3'-cGAMP-binding residues include Arg-238 and Thr-263. 2',3'-cUAMP-binding residues include Arg-238 and Thr-263. 3',3'-c-di-GMP contacts are provided by residues 238–241 (RVYT) and Thr-263. The interval 339–378 (EVTMGSTETSVMPGSSVLSQEPELLISGLEKPLPLRSDVF) is C-terminal tail (CTT). Ser-354 carries the phosphoserine modification. Phosphoserine; by TBK1 occurs at positions 357 and 365. The short motif at 362–365 (LLIS) is the pLxIS motif element.

Belongs to the STING family. As to quaternary structure, homodimer; forms a homodimer in absence of cyclic nucleotide (c-di-GMP or cGAMP); 'Lys-63'-linked ubiquitination at Lys-150 is required for homodimerization. Homotetramer; in presence of cyclic nucleotide (c-di-GMP or cGAMP), forms tetramers and higher-order oligomers through side-by-side packing. Interacts (when phosphorylated) with IRF3; following activation and phosphorylation on the pLxIS motif by TBK1, recruits IRF3. Interacts with RIGI, MAVS and SSR2. Interacts with RNF5 and TRIM56. Interacts with TBK1; when homodimer, leading to subsequent production of IFN-beta. Interacts with IFIT1 and IFIT2. Interacts with TRIM29; this interaction induces STING1 ubiquitination and subsequent degradation. Associates with the MHC-II complex. Interacts with STEEP1; interaction takes place upon cGAMP-activation and STING1 phosphorylation by MAP3K7/TAK1 and promotes STING1 translocation to COPII vesicles. Interacts with SEC24A, SEC24B and SEC24C; promoting translocation to COPII vesicles. Interacts (when ubiquitinated) with SQSTM1; leading to relocalization to autophagosomes. Interacts with SURF4. Interacts with HNRNPA2B1. Interacts with ZDHHC1; ZDHHC1 constitutively interacts with STING1 and in presence of DNA viruses activates it by promoting its cGAMP-induced oligomerization and the recruitment of downstream signaling components. Interacts with ZDHHC11; in presence of DNA viruses promotes the recruitment of IRF3 to STING1. Interacts with TOMM70. Interacts with TAB1; promoting recruitment of TAB1 to the endoplasmic reticulum membrane and subsequent activation of MAP3K7/TAK1. Interacts (via transmembrane domain) with TMEM203. Interacts with DDX41. Phosphorylation by TBK1 leads to activation and production of IFN-beta. Following cyclic nucleotide (c-di-GMP or cGAMP)-binding, activation and translocation from the endoplasmic reticulum, STING1 is phosphorylated by TBK1 at Ser-365 in the pLxIS motif. The phosphorylated pLxIS motif constitutes an IRF3-binding motif, leading to recruitment of the transcription factor IRF3 to induce type-I interferons and other cytokines. Phosphorylated on tyrosine residues upon MHC-II aggregation. Dephosphorylation by PPP6C leads to inactivation and decreased production of IFN-beta. Phosphorylation at Ser-357 is also required to activate IRF3. Phosphorylation at Ser-354 by MAP3K7/TAK1 facilitates its interaction with STEEP1, promoting STING1 translocation to COPII vesicles. In terms of processing, ubiquitinated. Ubiquitinated via 'Lys-63'-linked ubiquitin chains in response to double-stranded DNA treatment, leading to relocalization to autophagosomes and subsequent degradation; this process is dependent on SQSTM1. 'Lys-63'-linked ubiquitination mediated by TRIM56 at Lys-150 promotes homodimerization and recruitment of the antiviral kinase TBK1 and subsequent production of IFN-beta. 'Lys-48'-linked polyubiquitination at Lys-150 occurring after viral infection is mediated by RNF5 and leads to proteasomal degradation. 'Lys-11'-linked polyubiquitination at Lys-150 by RNF26 leads to stabilize STING1: it protects STING1 from RNF5-mediated 'Lys-48'-linked polyubiquitination. 'Lys-33'-linked and 'Lys-48'-linked deubiquitinated by USP20; leading to its stabilization and promotion of innate antiviral response. 'Lys-48'-linked deubiquitinated by USP44; leading to its stabilization and promotion of innate antiviral response. 'Lys-63'-linked deubiquitinated by USP49; leading to inhibition of the subsequent recruitment of TBK1 to the signaling complex. 'Lys-63'-linked ubiquitination mediated by RNF39 promotes the activation of the cGAS-STING pathway. Post-translationally, palmitoylation takes place in the Golgi apparatus and creates a platform for the recruitment of TBK1.

It localises to the endoplasmic reticulum membrane. The protein resides in the cytoplasm. The protein localises to the perinuclear region. Its subcellular location is the endoplasmic reticulum-Golgi intermediate compartment membrane. It is found in the golgi apparatus membrane. It localises to the cytoplasmic vesicle. The protein resides in the autophagosome membrane. The protein localises to the mitochondrion outer membrane. Its subcellular location is the cell membrane. The enzyme catalyses H(+)(in) = H(+)(out). Its function is as follows. Facilitator of innate immune signaling that acts as a sensor of cytosolic DNA from bacteria and viruses and promotes the production of type I interferon (IFN-alpha and IFN-beta). Innate immune response is triggered in response to non-CpG double-stranded DNA from viruses and bacteria delivered to the cytoplasm. Acts by binding cyclic dinucleotides: recognizes and binds cyclic di-GMP (c-di-GMP), a second messenger produced by bacteria, cyclic UMP-AMP (2',3'-cUAMP), and cyclic GMP-AMP (cGAMP), a messenger produced by CGAS in response to DNA virus in the cytosol. Upon binding to c-di-GMP or cGAMP, STING oligomerizes, translocates from the endoplasmic reticulum and is phosphorylated by TBK1 on the pLxIS motif, leading to recruitment and subsequent activation of the transcription factor IRF3 to induce expression of type I interferon and exert a potent anti-viral state. Exhibits 2',3' phosphodiester linkage-specific ligand recognition: can bind both 2'-3' linked cGAMP (2'-3'-cGAMP) and 3'-3' linked cGAMP but is preferentially activated by 2'-3' linked cGAMP. The preference for 2'-3'-cGAMP, compared to other linkage isomers is probably due to the ligand itself, whichs adopts an organized free-ligand conformation that resembles the STING1-bound conformation and pays low energy costs in changing into the active conformation. In addition to promote the production of type I interferons, plays a direct role in autophagy. Following cGAMP-binding, STING1 buds from the endoplasmic reticulum into COPII vesicles, which then form the endoplasmic reticulum-Golgi intermediate compartment (ERGIC). The ERGIC serves as the membrane source for WIPI2 recruitment and LC3 lipidation, leading to formation of autophagosomes that target cytosolic DNA or DNA viruses for degradation by the lysosome. Promotes autophagy by acting as a proton channel that directs proton efflux from the Golgi to facilitate MAP1LC3B/LC3B lipidation. The autophagy- and interferon-inducing activities can be uncoupled and autophagy induction is independent of TBK1 phosphorylation. Autophagy is also triggered upon infection by bacteria: following c-di-GMP-binding, which is produced by live Gram-positive bacteria, promotes reticulophagy. May be involved in translocon function, the translocon possibly being able to influence the induction of type I interferons. May be involved in transduction of apoptotic signals via its association with the major histocompatibility complex class II (MHC-II). The polypeptide is Stimulator of interferon genes protein (Bos taurus (Bovine)).